The chain runs to 125 residues: Glycine cleavage system H protein (125 aa).

The Lipoyl-binding domain maps to 22 to 104 (SYIIGITDFA…YDTGWILKLT (83 aa)). An N6-lipoyllysine modification is found at lysine 63.

This sequence belongs to the GcvH family. As to quaternary structure, the glycine cleavage system is composed of four proteins: P, T, L and H. (R)-lipoate is required as a cofactor.

Functionally, the glycine cleavage system catalyzes the degradation of glycine. The H protein shuttles the methylamine group of glycine from the P protein to the T protein. Its function is as follows. Is also involved in protein lipoylation via its role as an octanoyl/lipoyl carrier protein intermediate. This is Glycine cleavage system H protein from Listeria welshimeri serovar 6b (strain ATCC 35897 / DSM 20650 / CCUG 15529 / CIP 8149 / NCTC 11857 / SLCC 5334 / V8).